The chain runs to 755 residues: Cartilage oligomeric matrix protein (755 aa).

Residues 1-19 (MSPTACVLVLALAALRATG) form the signal peptide. The interval 21–84 (GQIPLGGDLA…PARTPGLSVR (64 aa)) is COMP N-terminal. Positions 85-124 (PVALCAPGSCFPGVVCTETATGARCGPCPPGYTGNGSHCT) constitute an EGF-like 1 domain. 21 cysteine pairs are disulfide-bonded: C89–C100, C94–C109, C112–C123, C129–C140, C134–C149, C152–C176, C182–C195, C189–C204, C207–C219, C227–C241, C235–C251, C253–C264, C280–C285, C290–C310, C326–C346, C349–C369, C385–C405, C408–C428, C446–C466, C482–C502, and C518–C739. N-linked (GlcNAc...) asparagine glycosylation is present at N119. An EGF-like 2; calcium-binding domain is found at 125-177 (DVNECNAHPCFPRVRCINTSPGFHCEACPPGFSGPTHEGVGLTFAKTNKQVCT). The EGF-like 3; calcium-binding domain maps to 178–220 (DINECETGQHNCVPNSVCVNTRGSFQCGPCQPGFVGDQRSGCQ). Residues 223-265 (GQHFCPDGSPSPCHEKADCILERDGSRSCVCAVGWAGNGLLCG) enclose the EGF-like 4 domain. TSP type-3 repeat units lie at residues 266–298 (RDTD…NSGQ), 299–334 (EDVD…NPDQ), 335–357 (RNSD…NDDQ), 358–393 (KDTD…NFDQ), 394–416 (SDSD…NPDQ), 417–454 (RDVD…NSAQ), 455–490 (QDSD…NPGQ), and 491–526 (EDND…EVTL). The segment at 295 to 501 (NSGQEDVDRD…DNDRDGVGDA (207 aa)) is disordered. 2 stretches are compositionally biased toward basic and acidic residues: residues 332 to 344 (PDQR…KWGD) and 350 to 365 (RSQK…RDGQ). Residue S394 is modified to Phosphoserine. Composition is skewed to basic and acidic residues over residues 412–424 (DNPD…HDFV) and 456–465 (DSDHDGKGDA). A mediates cell survival and induction of the IAP family of survival proteins region spans residues 525-755 (TLTDFRAFQT…DYERHRLRRA (231 aa)). One can recognise a TSP C-terminal domain in the interval 530 to 744 (RAFQTVVLDP…LRYRCNDTIP (215 aa)). N-linked (GlcNAc...) asparagine glycosylation is present at N740.

This sequence belongs to the thrombospondin family. Pentamer; disulfide-linked. Exists in a more compact conformation in the presence of calcium and shows a more extended conformation in the absence of calcium. Interacts with ITGB3, ITGA5 and FN1. Binding to FN1 requires the presence of divalent cations (Ca(2+), Mg(2+) or Mn(2+)). The greatest amount of binding is seen in the presence of Mn(2+). Interacts with MATN1, MATN3, MATN4 and ACAN. Binds heparin, heparan sulfate and chondroitin sulfate. EDTA dimishes significantly its binding to ACAN and abolishes its binding to MATN3, MATN4 and chondroitin sulfate. Interacts with collagen I, II and IX, and interaction with these collagens is dependent on the presence of zinc ions. Interacts with ADAMTS12. Interacts with ITGA7. The cofactor is Ca(2+). Post-translationally, proteolytically cleaved by metalloproteases ADAMTS4 and ADAMTS1 with ADAMTS4 showing more potent activity.

The protein resides in the secreted. The protein localises to the extracellular space. It is found in the extracellular matrix. In terms of biological role, plays a role in the structural integrity of cartilage via its interaction with other extracellular matrix proteins such as the collagens and fibronectin. Can mediate the interaction of chondrocytes with the cartilage extracellular matrix through interaction with cell surface integrin receptors. Could play a role in the pathogenesis of osteoarthritis. Potent suppressor of apoptosis in both primary chondrocytes and transformed cells. Suppresses apoptosis by blocking the activation of caspase-3 and by inducing the IAP family of survival proteins (BIRC3, BIRC2, BIRC5 and XIAP). Essential for maintaining a vascular smooth muscle cells (VSMCs) contractile/differentiated phenotype under physiological and pathological stimuli. Maintains this phenotype of VSMCs by interacting with ITGA7. The sequence is that of Cartilage oligomeric matrix protein from Rattus norvegicus (Rat).